The following is an 853-amino-acid chain: Vacuolar protein sorting-associated protein 41 homolog (853 aa).

Acidic residues predominate over residues 1 to 25 (MAEAEEQETESLEESTDESEEESEE). Residues 1–32 (MAEAEEQETESLEESTDESEEESEEEPKLKYE) form a disordered region. The segment at 1 to 539 (MAEAEEQETE…YLTLRHKDVF (539 aa)) is interaction with ARL8B. A CHCR repeat occupies 567–711 (VDMLLDNEDK…SIDKPPFITG (145 aa)). Residues 790–838 (CESCLSPILPTDAAKPFSVVVFHCRHMFHKECLPMPSMNAPAQYCNICS) form an RING-type; atypical zinc finger.

It belongs to the VPS41 family. As to quaternary structure, component of the putative homotypic fusion and vacuole protein sorting (HOPS) complex; the core of which composed of the class C Vps proteins VPS11, VPS16, VPS18 and VPS33A, is associated with VPS39 and VPS41. Interacts with RILP, MON1B. Interacts with ARL8B (GTP-bound form); involved in recruitment to lysosomes and probably hierarchial assembly of the HOPS complex at lysosomal membranes. In vitro can self-assemble into a lattice. Associates with adapter protein complex 3 (AP-3) and clathrin:AP-3 complexes. Interacts with STX17; this interaction is increased in the absence of TMEM39A. Interacts with ARL8B and PLEKHM1; the interaction mediates the recruitment of the HOPS complex to lysosomes. Interacts with RAB7, RAB2A and RAB2B. Interacts with RAB39A (GTP-bound) and RAB39B (GTP-bound); interaction with RAB39A leads to a functional HOPS complex that mediates autophagosome-lysosome membrane tethering.

The protein localises to the endosome membrane. It is found in the late endosome membrane. Its subcellular location is the early endosome membrane. It localises to the lysosome membrane. The protein resides in the golgi apparatus. The protein localises to the trans-Golgi network. It is found in the cytoplasmic vesicle. Its subcellular location is the clathrin-coated vesicle. It localises to the cytoplasm. The protein resides in the cytosol. In terms of biological role, plays a role in vesicle-mediated protein trafficking to lysosomal compartments including the endocytic membrane transport and autophagic pathways. Believed to act in part as a core component of the putative HOPS endosomal tethering complex is proposed to be involved in the Rab5-to-Rab7 endosome conversion probably implicating MON1A/B, and via binding SNAREs and SNARE complexes to mediate tethering and docking events during SNARE-mediated membrane fusion. The HOPS complex is proposed to be recruited to Rab7 on the late endosomal membrane and to regulate late endocytic, phagocytic and autophagic traffic towards lysosomes. Involved in homotypic vesicle fusions between late endosomes and in heterotypic fusions between late endosomes and lysosomes implicated in degradation of endocytosed cargo. Required for fusion of autophagosomes with lysosomes. Links the HOPS complex to endosomal via its association with RILP and to lysosomal membranes via its association with ARL8B, suggesting that these interactions may bring the compartments to close proximity for fusion. Involved in the direct trans-Golgi network to late endosomes transport of lysosomal membrane proteins independently of HOPS. Involved in sorting to the regulated secretory pathway presumably implicating the AP-3 adapter complex. May play a role in HOPS-independent function in the regulated secretory pathway. The chain is Vacuolar protein sorting-associated protein 41 homolog (Vps41) from Mus musculus (Mouse).